The chain runs to 488 residues: Glutamate--tRNA ligase (488 aa).

The 'HIGH' region signature appears at 16 to 26 (PSPTGEPHVGT). The short motif at 257–261 (KLSKR) is the 'KMSKS' region element. Lys-260 serves as a coordination point for ATP.

It belongs to the class-I aminoacyl-tRNA synthetase family. Glutamate--tRNA ligase type 1 subfamily. Monomer.

It localises to the cytoplasm. The enzyme catalyses tRNA(Glu) + L-glutamate + ATP = L-glutamyl-tRNA(Glu) + AMP + diphosphate. Catalyzes the attachment of glutamate to tRNA(Glu) in a two-step reaction: glutamate is first activated by ATP to form Glu-AMP and then transferred to the acceptor end of tRNA(Glu). In Rhizobium etli (strain ATCC 51251 / DSM 11541 / JCM 21823 / NBRC 15573 / CFN 42), this protein is Glutamate--tRNA ligase.